The sequence spans 51 residues: uncharacterized protein (51 aa).

The segment at 1-42 is disordered; that stretch reads MKMKTNKYMNMVRPAPPRRADPEGVRDPSTMGGGPNPFLRRS.

The protein resides in the mitochondrion. This is an uncharacterized protein from Saccharomyces cerevisiae (strain ATCC 204508 / S288c) (Baker's yeast).